Consider the following 1705-residue polypeptide: ALK tyrosine kinase receptor (1705 aa).

The signal sequence occupies residues 1-21 (MIARILYFFLWSAAFLPELQC). Residues 22–1035 (ASQRTADALT…SLSHLALGLS (1014 aa)) are Extracellular-facing. 2 N-linked (GlcNAc...) asparagine glycosylation sites follow: asparagine 40 and asparagine 48. The heparin-binding region stretch occupies residues 54-76 (RIKRKTLSVDFAVPSLLRYYLAL). N-linked (GlcNAc...) asparagine glycans are attached at residues asparagine 124, asparagine 259, asparagine 334, asparagine 434, asparagine 442, asparagine 458, asparagine 484, asparagine 578, asparagine 590, and asparagine 635. Residues 486-644 (SYCSFGREDC…NFTLSMECFL (159 aa)) enclose the MAM domain. A disulfide bond links cysteine 694 and cysteine 707. An N-linked (GlcNAc...) asparagine glycan is attached at asparagine 717. Cysteines 788 and 799 form a disulfide. 2 N-linked (GlcNAc...) asparagine glycosylation sites follow: asparagine 808 and asparagine 881. Positions 842–892 (GGGRGYSSQSETPEEVMDRDPSIPGRNGKSGTAGGGGGWNDSAPVPQGGRP) are disordered. Cysteine 903 and cysteine 921 are joined by a disulfide. Asparagine 979 carries N-linked (GlcNAc...) asparagine glycosylation. 2 disulfides stabilise this stretch: cysteine 980-cysteine 988 and cysteine 983-cysteine 997. Residues 980–1016 (CSHCESGDCHETSEGMVCYCDEELTLAPDGVSCINST) are EGF-like. Asparagine 1014 is a glycosylation site (N-linked (GlcNAc...) asparagine). Residues 1036–1056 (VGTSALIAALLLAVSGVMIMY) form a helical membrane-spanning segment. Residues 1057 to 1705 (RRKHTELQSI…KMEGHNATVL (649 aa)) are Cytoplasmic-facing. Residues 1113–1389 (ISLTRGLGHG…IDYCLQDPDV (277 aa)) form the Protein kinase domain. ATP is bound by residues 1119-1127 (LGHGAFGEV) and lysine 1147. Aspartate 1246 (proton acceptor) is an active-site residue. Disordered stretches follow at residues 1395-1499 (PVEY…GHVN), 1505-1524 (AHSSEKESRNRKPTNLWNPT), 1532-1557 (QQQKRQQVQAQRQTSGPRIPGEGQEQ), 1588-1613 (QQQQQQQQQQGLCRPLLPPPPPPAPT), and 1646-1681 (GLPMEPMQGPQLPPPHPGQQRPISLTRASGPEDSRP). The span at 1484–1493 (KPSSTTSNAQ) shows a compositional bias: polar residues. Composition is skewed to low complexity over residues 1532 to 1544 (QQQKRQQVQAQRQ) and 1588 to 1602 (QQQQQQQQQQGLCRP). Residues 1603–1613 (LLPPPPPPAPT) show a composition bias toward pro residues.

The protein belongs to the protein kinase superfamily. Tyr protein kinase family. Insulin receptor subfamily. In terms of assembly, homodimer; homodimerizes upon binding to alkal ligands (alkal1, alkal2a or alkal2b). As to expression, highly expressed in the developing central nervous system: highly expressed in brain, with much lower expression in heart, caudal fin and testis.

It is found in the cell membrane. The catalysed reaction is L-tyrosyl-[protein] + ATP = O-phospho-L-tyrosyl-[protein] + ADP + H(+). With respect to regulation, inhibited by ALK inhibitor TAE684. In terms of biological role, receptor tyrosine kinase required for neurogenesis in the developing central nervous system. Following activation by alkal ligands (alkal1, alkal2a or alkal2b) at the cell surface, transduces an extracellular signal into an intracellular response. Ligand-binding to the extracellular domain induces tyrosine kinase activation, resulting in the activation of the mitogen-activated protein kinase (MAPK) pathway. Phosphorylates almost exclusively at the first tyrosine of the Y-x-x-x-Y-Y motif. The sequence is that of ALK tyrosine kinase receptor from Danio rerio (Zebrafish).